The following is a 344-amino-acid chain: Arginine N-succinyltransferase (344 aa).

A succinyl-CoA-binding site is contributed by leucine 125. Residue histidine 229 is the Proton donor of the active site.

It belongs to the arginine N-succinyltransferase family.

It catalyses the reaction succinyl-CoA + L-arginine = N(2)-succinyl-L-arginine + CoA + H(+). It functions in the pathway amino-acid degradation; L-arginine degradation via AST pathway; L-glutamate and succinate from L-arginine: step 1/5. In terms of biological role, catalyzes the transfer of succinyl-CoA to arginine to produce N(2)-succinylarginine. The chain is Arginine N-succinyltransferase from Shigella boydii serotype 18 (strain CDC 3083-94 / BS512).